The chain runs to 161 residues: Type II secretion system protein M (161 aa).

The Cytoplasmic segment spans residues 1 to 16 (MNELRRRWQVMSQRER). The chain crosses the membrane as a helical span at residues 17–37 (LMALACGGLVVLCLLYYLIWA). At 38–161 (PWQESVRQWQ…VTRLSLERVL (124 aa)) the chain is on the periplasmic side.

Belongs to the GSP M family. As to quaternary structure, type II secretion system is composed of four main components: the outer membrane complex, the inner membrane complex, the cytoplasmic secretion ATPase and the periplasm-spanning pseudopilus. Forms homodimers. Interacts with OutL/GspL. Interacts with OutE/GspE and OutF/GspF.

The protein localises to the cell inner membrane. Functionally, inner membrane component of the type II secretion system required for the energy-dependent secretion of extracellular factors such as proteases and toxins from the periplasm. Plays a role in the complex assembly and recruits OutL resulting in a stable complex in the inner membrane. Provides thus a link between the energy-providing OutE protein in the cytoplasm and the rest of the T2SS machinery. This Dickeya chrysanthemi (Pectobacterium chrysanthemi) protein is Type II secretion system protein M (outM).